A 434-amino-acid chain; its full sequence is RNA-binding protein SRO9 (434 aa).

A compositionally biased stretch (low complexity) spans Met-1–Ala-13. Positions Met-1–Gln-243 are disordered. The segment covering Ser-26–Pro-41 has biased composition (polar residues). A Phosphoserine modification is found at Ser-55. Over residues Lys-93–Ala-124 the composition is skewed to low complexity. Residues Asn-125 to Gln-140 are compositionally biased toward basic residues. Ser-148 carries the post-translational modification Phosphoserine. Lys-156 participates in a covalent cross-link: Glycyl lysine isopeptide (Lys-Gly) (interchain with G-Cter in ubiquitin). Polar residues predominate over residues Ala-158–Thr-167. The segment covering Pro-173–His-195 has biased composition (basic residues). Polar residues predominate over residues Asn-196 to Phe-208. The span at Arg-218–Arg-227 shows a compositional bias: low complexity. The segment covering Ser-228 to Gln-238 has biased composition (basic residues). An HTH La-type RNA-binding domain is found at Val-255–Ala-351. Residues Lys-301, Lys-342, and Lys-352 each participate in a glycyl lysine isopeptide (Lys-Gly) (interchain with G-Cter in ubiquitin) cross-link. The disordered stretch occupies residues Ser-396 to Leu-434. Ser-422 carries the post-translational modification Phosphoserine.

Interacts with HAP1. Component of the HMC including HAP1, SRO9 and YDJ1.

The protein resides in the cytoplasm. Functionally, may overlap in function with tropomyosin and may be involved in organization of actin filaments. Acts as a multicopy suppressor of RHO3 mutation. RNA-binding protein which may modulate mRNA translation. Involved in heme regulation of HAP1, as a component of the high-molecular-weight complex (HMC). The polypeptide is RNA-binding protein SRO9 (SRO9) (Saccharomyces cerevisiae (strain ATCC 204508 / S288c) (Baker's yeast)).